An 86-amino-acid polypeptide reads, in one-letter code: Cell division topological specificity factor (86 aa).

The protein belongs to the MinE family.

In terms of biological role, prevents the cell division inhibition by proteins MinC and MinD at internal division sites while permitting inhibition at polar sites. This ensures cell division at the proper site by restricting the formation of a division septum at the midpoint of the long axis of the cell. In Stenotrophomonas maltophilia (strain R551-3), this protein is Cell division topological specificity factor.